Consider the following 298-residue polypeptide: GTPase Era (298 aa).

The Era-type G domain occupies R7–Q174. A G1 region spans residues G15–S22. Residue G15–S22 coordinates GTP. Residues Q41–N45 form a G2 region. The tract at residues D62–G65 is G3. GTP contacts are provided by residues D62 to I66 and N124 to D127. The tract at residues N124 to D127 is G4. The segment at I153 to A155 is G5. The KH type-2 domain occupies T205–K283.

Belongs to the TRAFAC class TrmE-Era-EngA-EngB-Septin-like GTPase superfamily. Era GTPase family. In terms of assembly, monomer.

It is found in the cytoplasm. It localises to the cell inner membrane. Its function is as follows. An essential GTPase that binds both GDP and GTP, with rapid nucleotide exchange. Plays a role in 16S rRNA processing and 30S ribosomal subunit biogenesis and possibly also in cell cycle regulation and energy metabolism. This is GTPase Era from Geobacter metallireducens (strain ATCC 53774 / DSM 7210 / GS-15).